Here is a 62-residue protein sequence, read N- to C-terminus: Large ribosomal subunit protein bL28 (62 aa).

This sequence belongs to the bacterial ribosomal protein bL28 family.

This chain is Large ribosomal subunit protein bL28, found in Ruminiclostridium cellulolyticum (strain ATCC 35319 / DSM 5812 / JCM 6584 / H10) (Clostridium cellulolyticum).